The following is a 284-amino-acid chain: 4-hydroxybenzoate octaprenyltransferase (284 aa).

The next 8 membrane-spanning stretches (helical) occupy residues 18-38, 42-62, 93-113, 136-156, 161-181, 209-229, 233-253, and 264-284; these read PIGT…AAEG, WHVL…GCVI, IILF…MNPL, HLPQ…AWAA, LPWV…AYDT, LIIG…GLHY, QSFY…QHLI, and AFLN…VAFW.

Belongs to the UbiA prenyltransferase family. The cofactor is Mg(2+).

It localises to the cell inner membrane. It catalyses the reaction all-trans-octaprenyl diphosphate + 4-hydroxybenzoate = 4-hydroxy-3-(all-trans-octaprenyl)benzoate + diphosphate. The protein operates within cofactor biosynthesis; ubiquinone biosynthesis. Its function is as follows. Catalyzes the prenylation of para-hydroxybenzoate (PHB) with an all-trans polyprenyl group. Mediates the second step in the final reaction sequence of ubiquinone-8 (UQ-8) biosynthesis, which is the condensation of the polyisoprenoid side chain with PHB, generating the first membrane-bound Q intermediate 3-octaprenyl-4-hydroxybenzoate. This Vibrio vulnificus (strain CMCP6) protein is 4-hydroxybenzoate octaprenyltransferase.